The sequence spans 213 residues: Thiopurine S-methyltransferase (213 aa).

S-adenosyl-L-methionine-binding residues include tryptophan 10, methionine 45, glutamate 66, and arginine 120.

Belongs to the class I-like SAM-binding methyltransferase superfamily. TPMT family.

It localises to the cytoplasm. It carries out the reaction S-adenosyl-L-methionine + a thiopurine = S-adenosyl-L-homocysteine + a thiopurine S-methylether.. This is Thiopurine S-methyltransferase from Photobacterium profundum (strain SS9).